We begin with the raw amino-acid sequence, 504 residues long: Chromosomal replication initiator protein DnaA (504 aa).

A domain I, interacts with DnaA modulators region spans residues 1 to 109 (MTADPDPPFV…PTDEPEDAPD (109 aa)). The interval 98–162 (ATPTDEPEDA…PDTSSDDSNA (65 aa)) is disordered. Over residues 109-125 (DSFADSPAPASVPAGPA) the composition is skewed to low complexity. The interval 110–163 (SFADSPAPASVPAGPADADEIDDDRDARVNAQESWPKYFSRPEPDTSSDDSNAV) is domain II. The tract at residues 164 to 380 (NLNRRYTFDT…GALIRVTAFA (217 aa)) is domain III, AAA+ region. The ATP site is built by Gly-208, Gly-210, Lys-211, and Thr-212. Residues 381 to 504 (SLNKTRIDRS…TTRIRQRAKR (124 aa)) form a domain IV, binds dsDNA region.

This sequence belongs to the DnaA family. In terms of assembly, oligomerizes as a right-handed, spiral filament on DNA at oriC.

The protein resides in the cytoplasm. In terms of biological role, plays an essential role in the initiation and regulation of chromosomal replication. ATP-DnaA binds to the origin of replication (oriC) to initiate formation of the DNA replication initiation complex once per cell cycle. Binds the DnaA box (a 9 base pair repeat at the origin) and separates the double-stranded (ds)DNA. Forms a right-handed helical filament on oriC DNA; dsDNA binds to the exterior of the filament while single-stranded (ss)DNA is stabiized in the filament's interior. The ATP-DnaA-oriC complex binds and stabilizes one strand of the AT-rich DNA unwinding element (DUE), permitting loading of DNA polymerase. After initiation quickly degrades to an ADP-DnaA complex that is not apt for DNA replication. Binds acidic phospholipids. Functionally, the probable consensus sequence for the DnaA box of this bacterium is 5'-TT(G/C)TCCACA-3'. The sequence is that of Chromosomal replication initiator protein DnaA from Mycolicibacterium smegmatis (strain ATCC 700084 / mc(2)155) (Mycobacterium smegmatis).